We begin with the raw amino-acid sequence, 561 residues long: Arginine--tRNA ligase (561 aa).

A 'HIGH' region motif is present at residues 128 to 138; sequence ANPTGPLHVGH.

The protein belongs to the class-I aminoacyl-tRNA synthetase family. As to quaternary structure, monomer.

Its subcellular location is the cytoplasm. It catalyses the reaction tRNA(Arg) + L-arginine + ATP = L-arginyl-tRNA(Arg) + AMP + diphosphate. The protein is Arginine--tRNA ligase of Leptothrix cholodnii (strain ATCC 51168 / LMG 8142 / SP-6) (Leptothrix discophora (strain SP-6)).